A 423-amino-acid chain; its full sequence is UPF0229 protein Pmen_4018 (423 aa).

The tract at residues 65–108 is disordered; it reads HHGRGGKQTIVHPGNKEFTAGERIPRPQGGGGGRGSGKASNSGE.

Belongs to the UPF0229 family.

The polypeptide is UPF0229 protein Pmen_4018 (Ectopseudomonas mendocina (strain ymp) (Pseudomonas mendocina)).